Here is a 278-residue protein sequence, read N- to C-terminus: MTVLHSVDFFPSGNASVAIEPRLPQADFPEHHHDFHEIVIVEHGTGIHVFNGQPYTITGGTVCFVRDHDRHLYEHTDNLCLTNVLYRSPDRFQFLAGLNQLLPQEQDGQYPSHWRVNHSVLQQVRQLVAQMEQQEGENDLPSTASREILFMQLLLLLRKSSLQENLENSASRLNLLLAWLEDHFADEVNWDAVADQFSLSLRTLHRQLKQQTGLTPQRYLNRLRLMKARHLLRHSEASVTDIAYRCGFSDSNHFSTLFRREFNWSPRDIRQGRDGFLQ.

In terms of domain architecture, HTH araC/xylS-type spans 174-272; sequence NLLLAWLEDH…NWSPRDIRQG (99 aa). DNA-binding regions (H-T-H motif) lie at residues 191-212 and 239-262; these read DAVA…KQQT and VTDI…RREF.

In terms of assembly, binds DNA as a dimer.

The protein localises to the cytoplasm. Functionally, activates expression of the rhaBAD and rhaT operons. The protein is HTH-type transcriptional activator RhaS of Escherichia coli O127:H6 (strain E2348/69 / EPEC).